The chain runs to 459 residues: Cysteine--tRNA ligase (459 aa).

Cysteine 27 contributes to the Zn(2+) binding site. Positions 29 to 39 match the 'HIGH' region motif; sequence VTVYDDCHIGH. 3 residues coordinate Zn(2+): cysteine 208, histidine 233, and glutamate 237. The short motif at 265–269 is the 'KMSKS' region element; sequence KMSKS. Lysine 268 provides a ligand contact to ATP.

The protein belongs to the class-I aminoacyl-tRNA synthetase family. Monomer. Zn(2+) is required as a cofactor.

It is found in the cytoplasm. It catalyses the reaction tRNA(Cys) + L-cysteine + ATP = L-cysteinyl-tRNA(Cys) + AMP + diphosphate. This is Cysteine--tRNA ligase from Francisella tularensis subsp. novicida (strain U112).